Reading from the N-terminus, the 403-residue chain is MSEKGRLFTSESVTEGHPDKICDAISDSVLDALLAQDPRSRVAVETLVTTGQVHVVGEVTTTAKEAFADITNTVRERILDIGYDSSDKGFDGASCGVNIGIGAQSPDIAQGVDTAHETRVEGAADPLDAQGAGDQGLMFGYAINDTPERMPLPIALAHRLSRRLTEVRKNGVLPYLRPDGKTQVTIEFEDDVPVRLDTVVISTQHAADIDLENTLTPDIREKVLNTVLNDLAHDTLDTSSTRLLVNPTGKFVVGGPMGDAGLTGRKIIVDTYGGWARHGGGAFSGKDPSKVDRSAAYAMRWVAKNIVAAGLAERVEVQVAYAIGKAAPVGLFIETFGTATVDPVKIEKIVPEVFDLRPGAIIRDLDLLRPIYAQTAAYGHFGRTDVELPWEQLNKVDDLKRAI.

H17 serves as a coordination point for ATP. D19 is a Mg(2+) binding site. E45 contributes to the K(+) binding site. L-methionine-binding residues include E58 and Q104. The segment at 104–114 is flexible loop; that stretch reads QSPDIAQGVDT. Residues 179–181, 250–251, D259, 265–266, A282, and K286 contribute to the ATP site; these read DGK, KF, and RK. D259 provides a ligand contact to L-methionine. Position 290 (K290) interacts with L-methionine.

The protein belongs to the AdoMet synthase family. In terms of assembly, homotetramer; dimer of dimers. Mg(2+) is required as a cofactor. The cofactor is K(+).

The protein resides in the cytoplasm. It carries out the reaction L-methionine + ATP + H2O = S-adenosyl-L-methionine + phosphate + diphosphate. The protein operates within amino-acid biosynthesis; S-adenosyl-L-methionine biosynthesis; S-adenosyl-L-methionine from L-methionine: step 1/1. Functionally, catalyzes the formation of S-adenosylmethionine (AdoMet) from methionine and ATP. The overall synthetic reaction is composed of two sequential steps, AdoMet formation and the subsequent tripolyphosphate hydrolysis which occurs prior to release of AdoMet from the enzyme. The sequence is that of S-adenosylmethionine synthase from Mycobacterium avium (strain 104).